Here is a 270-residue protein sequence, read N- to C-terminus: uncharacterized protein (270 aa).

It is found in the cytoplasm. This is an uncharacterized protein from Schizosaccharomyces pombe (strain 972 / ATCC 24843) (Fission yeast).